The chain runs to 332 residues: Galectin-4 (332 aa).

2 consecutive Galectin domains span residues 19–150 (YHNP…INFI) and 203–332 (FNGR…YVQI). 265 to 271 (WGSEERK) is an a beta-D-galactoside binding site. Ser267 is modified (phosphoserine).

Monomer.

Galectin that binds lactose and a related range of sugars. May be involved in the assembly of adherens junctions. The protein is Galectin-4 (LGALS4) of Bos taurus (Bovine).